Reading from the N-terminus, the 582-residue chain is Transcription factor PCF5 (582 aa).

Disordered regions lie at residues 30–78 and 123–195; these read AAGK…QHDH and SPMG…GGGG. Residues 51–64 show a composition bias toward gly residues; that stretch reads GGDGGGVGGGGSGG. A TCP domain is found at 213–271; that stretch reads RKDRHSKVCTARGPRDRRVRLSAHTAIQFYDVQDRLGYDRPSKAVDWLIKNAKDAIDKL. Disordered regions lie at residues 283 to 306, 402 to 423, and 548 to 582; these read GAGAGNAAAPPSSSTHPDSAENSD, MFHHQQHRHGGGGGGGNGTTQQ, and RLPARIQGDEEHNGGGGGNGDKPPPPSSVSSASHH.

Forms homodimers and heterodimers with PCF2.

The protein localises to the nucleus. Functionally, transcription activator. Binds the promoter core sequence 5'-GGNCC-3'. This chain is Transcription factor PCF5 (PCF5), found in Oryza sativa subsp. indica (Rice).